Here is a 307-residue protein sequence, read N- to C-terminus: uncharacterized protein (307 aa).

The region spanning 54–307 (RHYLSTSMRV…KALPVDFFRE (254 aa)) is the EAL domain. A run of 2 helical transmembrane segments spans residues 158 to 178 (PGFL…AHAL) and 203 to 223 (ALGV…LAYL).

It is found in the cell membrane. This is an uncharacterized protein from Mycobacterium tuberculosis (strain CDC 1551 / Oshkosh).